A 246-amino-acid polypeptide reads, in one-letter code: Vacuolar iron transporter 2 (246 aa).

Topologically, residues 1-32 (MVKEFVQDEEKQRLLLDEHTEKHFTAGEVVRD) are cytoplasmic. The helical transmembrane segment at 33-53 (IIIGVSDGLTVPFALAAGLSG) threads the bilayer. At 54-58 (ANAPS) the chain is on the vacuolar side. Residues 59–79 (ALVLTAGLAEVAAGAISMGLG) traverse the membrane as a helical segment. The Cytoplasmic segment spans residues 80-164 (GYLAAKSDAD…PEPRRALMSA (85 aa)). The interval 86–161 (SDADHYHREL…LEKPEPRRAL (76 aa)) is cytoplasmic metal binding domain (MBD). Fe cation contacts are provided by E98, E101, E109, E112, M145, and E149. Residues 165–185 (GTIALAYVVGGLVPLLPYMFV) form a helical membrane-spanning segment. At 186 to 190 (PTADR) the chain is on the vacuolar side. A helical transmembrane segment spans residues 191–211 (AMATSVVVTLAALLFFGYVKG). At 212-218 (RFTGNRP) the chain is on the cytoplasmic side. Residues 219-239 (FISAFQTAVIGALASAAAFGM) form a helical membrane-spanning segment. The Vacuolar portion of the chain corresponds to 240–246 (AKAVQSI).

This sequence belongs to the CCC1 family. Homodimer. The dimeric interaction is mediated by both the transmembrane domains (TMDs) and the cytoplasmic metal binding domain (MBD). In terms of tissue distribution, expressed in leaf sheaths and at lower level in leaf blades.

The protein localises to the vacuole membrane. It carries out the reaction Fe(2+)(in) = Fe(2+)(out). Functionally, vacuolar iron transporter involved in the transfer of iron ions from the cytosol to the vacuole for intracellular iron storage. Vacuolar iron storage is required for seed embryo and seedling development. May be involved in the regulation of iron translocation between flag leaves and seeds. Can transport zinc ions from the cytosol to the vacuole. The polypeptide is Vacuolar iron transporter 2 (Oryza sativa subsp. japonica (Rice)).